Here is a 121-residue protein sequence, read N- to C-terminus: Large ribosomal subunit protein bL12 (121 aa).

The protein belongs to the bacterial ribosomal protein bL12 family. In terms of assembly, homodimer. Part of the ribosomal stalk of the 50S ribosomal subunit. Forms a multimeric L10(L12)X complex, where L10 forms an elongated spine to which 2 to 4 L12 dimers bind in a sequential fashion. Binds GTP-bound translation factors.

Functionally, forms part of the ribosomal stalk which helps the ribosome interact with GTP-bound translation factors. Is thus essential for accurate translation. The chain is Large ribosomal subunit protein bL12 from Oenococcus oeni (strain ATCC BAA-331 / PSU-1).